The sequence spans 316 residues: Adenine deaminase (316 aa).

Residues His14, His16, and His194 each contribute to the Zn(2+) site. Residue Glu197 is the Proton donor of the active site. Asp275 is a Zn(2+) binding site. Residue Asp276 coordinates substrate.

It belongs to the metallo-dependent hydrolases superfamily. Adenosine and AMP deaminases family. Adenine deaminase type 2 subfamily. The cofactor is Zn(2+).

The catalysed reaction is adenine + H2O + H(+) = hypoxanthine + NH4(+). Catalyzes the hydrolytic deamination of adenine to hypoxanthine. Plays an important role in the purine salvage pathway and in nitrogen catabolism. This Pseudomonas aeruginosa (strain UCBPP-PA14) protein is Adenine deaminase.